The following is a 378-amino-acid chain: Carbamoyl phosphate synthase small chain (378 aa).

The tract at residues 1–189 is CPSase; it reads MTKPAILALA…DSHPEIAASE (189 aa). Residues S47, G241, and G243 each contribute to the L-glutamine site. The Glutamine amidotransferase type-1 domain occupies 193–378; it reads HVVAYDYGVK…RFIDAMAKRR (186 aa). Catalysis depends on C269, which acts as the Nucleophile. L-glutamine contacts are provided by L270, Q273, N311, G313, and F314. Catalysis depends on residues H353 and E355.

The protein belongs to the CarA family. Composed of two chains; the small (or glutamine) chain promotes the hydrolysis of glutamine to ammonia, which is used by the large (or ammonia) chain to synthesize carbamoyl phosphate. Tetramer of heterodimers (alpha,beta)4.

The catalysed reaction is hydrogencarbonate + L-glutamine + 2 ATP + H2O = carbamoyl phosphate + L-glutamate + 2 ADP + phosphate + 2 H(+). It carries out the reaction L-glutamine + H2O = L-glutamate + NH4(+). It participates in amino-acid biosynthesis; L-arginine biosynthesis; carbamoyl phosphate from bicarbonate: step 1/1. It functions in the pathway pyrimidine metabolism; UMP biosynthesis via de novo pathway; (S)-dihydroorotate from bicarbonate: step 1/3. Functionally, small subunit of the glutamine-dependent carbamoyl phosphate synthetase (CPSase). CPSase catalyzes the formation of carbamoyl phosphate from the ammonia moiety of glutamine, carbonate, and phosphate donated by ATP, constituting the first step of 2 biosynthetic pathways, one leading to arginine and/or urea and the other to pyrimidine nucleotides. The small subunit (glutamine amidotransferase) binds and cleaves glutamine to supply the large subunit with the substrate ammonia. The chain is Carbamoyl phosphate synthase small chain from Pseudomonas syringae pv. tomato (strain ATCC BAA-871 / DC3000).